The chain runs to 488 residues: Transmembrane protein 39A (488 aa).

2 N-linked (GlcNAc...) asparagine glycosylation sites follow: N31 and N39. The next 8 helical transmembrane spans lie at 72–92 (SLLFEFLFFIYLLVALFIQYI), 110–130 (TSLNFHLIDYHLAAFITVMLA), 154–174 (VLISARLVLLTLCGWVLCWTL), 182–202 (SVLNLLFLGYPFGVYVPLCCF), 287–307 (EVLFNSLFSAYYVAFLPLCFV), 319–339 (CEHLIMVWINAFVMLTTQLLP), 420–440 (LLNLLILIEGSVVFYQLYSLL), and 446–466 (NHTLSMALILFCNYYVLFKLL).

Belongs to the TMEM39 family. Interacts with SACM1L, SEC23A and SEC24A.

Its subcellular location is the endoplasmic reticulum membrane. Functionally, regulates autophagy by controlling the spatial distribution and levels of the intracellular phosphatidylinositol 4-phosphate (PtdIns(4)P) pools. Modulates (PtdIns(4)P) levels by regulating the ER-to-Golgi trafficking of the phosphatidylinositide phosphatase SACM1L. The polypeptide is Transmembrane protein 39A (TMEM39A) (Bos taurus (Bovine)).